The primary structure comprises 370 residues: tRNA-specific 2-thiouridylase MnmA (370 aa).

ATP-binding positions include 24–31 and Leu50; that span reads AMSGGVDS. Residue Cys119 is the Nucleophile of the active site. Cys119 and Cys215 are disulfide-bonded. Gly143 is a binding site for ATP. Positions 165-167 are interaction with tRNA; sequence KDQ. Cys215 (cysteine persulfide intermediate) is an active-site residue.

Belongs to the MnmA/TRMU family.

The protein localises to the cytoplasm. The catalysed reaction is S-sulfanyl-L-cysteinyl-[protein] + uridine(34) in tRNA + AH2 + ATP = 2-thiouridine(34) in tRNA + L-cysteinyl-[protein] + A + AMP + diphosphate + H(+). In terms of biological role, catalyzes the 2-thiolation of uridine at the wobble position (U34) of tRNA, leading to the formation of s(2)U34. The chain is tRNA-specific 2-thiouridylase MnmA from Wolbachia sp. subsp. Drosophila simulans (strain wRi).